A 327-amino-acid polypeptide reads, in one-letter code: MSTTEVVRDAQSAENYNPLAKQKAAAKLSRIPVKVVQQGEVLKKPEWIRVKAGSPTTRFYEIKQILRESNLHTVCEEASCPNIGECFGNGTATFMIMGDKCTRRCPFCDVGHGRPDPLDKDEPLNLAKTIAKLRLKYVVITSVDRDDLRDGGSQHFVDCITNIRELSPMTQIEILVPDFRGRDDRALEILKAAPPDVMNHNLETAPRLYKEARPGSDYQFSLNLLKKFKALHPQVPTKSGIMVGLGETDEEILQVMRDMRAHDIDMLTIGQYLSPSGSHLPVRRYVHPDTFKMFEEEAYKMGFSHAAVGAMVRSSYHADQQAHAAGV.

Residues cysteine 75, cysteine 80, cysteine 86, cysteine 101, cysteine 105, cysteine 108, and serine 315 each coordinate [4Fe-4S] cluster. Residues 87–304 form the Radical SAM core domain; it reads FGNGTATFMI…EEEAYKMGFS (218 aa).

Belongs to the radical SAM superfamily. Lipoyl synthase family. [4Fe-4S] cluster is required as a cofactor.

Its subcellular location is the cytoplasm. It catalyses the reaction [[Fe-S] cluster scaffold protein carrying a second [4Fe-4S](2+) cluster] + N(6)-octanoyl-L-lysyl-[protein] + 2 oxidized [2Fe-2S]-[ferredoxin] + 2 S-adenosyl-L-methionine + 4 H(+) = [[Fe-S] cluster scaffold protein] + N(6)-[(R)-dihydrolipoyl]-L-lysyl-[protein] + 4 Fe(3+) + 2 hydrogen sulfide + 2 5'-deoxyadenosine + 2 L-methionine + 2 reduced [2Fe-2S]-[ferredoxin]. It participates in protein modification; protein lipoylation via endogenous pathway; protein N(6)-(lipoyl)lysine from octanoyl-[acyl-carrier-protein]: step 2/2. Catalyzes the radical-mediated insertion of two sulfur atoms into the C-6 and C-8 positions of the octanoyl moiety bound to the lipoyl domains of lipoate-dependent enzymes, thereby converting the octanoylated domains into lipoylated derivatives. The polypeptide is Lipoyl synthase (Variovorax paradoxus (strain S110)).